The primary structure comprises 305 residues: Axin interactor, dorsalization-associated protein A (305 aa).

The tract at residues 153–220 is axin-binding; sequence GTLLPRLPSE…RKEDTYVHFN (68 aa). One can recognise a C2 Aida-type domain in the interval 156–303; that stretch reads LPRLPSEPGM…LYLHLLQTLL (148 aa).

This sequence belongs to the AIDA family.

Its function is as follows. Acts as a ventralizing factor during embryogenesis. Inhibits axin-mediated JNK activation by binding axin and disrupting axin homodimerization. This in turn antagonizes a Wnt/beta-catenin-independent dorsalization pathway activated by axin/JNK-signaling. This Xenopus laevis (African clawed frog) protein is Axin interactor, dorsalization-associated protein A (aida-a).